Consider the following 1192-residue polypeptide: Protein WWC2 (1192 aa).

WW domains are found at residues 10 to 43 (LPLP…DPRD) and 57 to 90 (DELP…DPRK). Coiled coils occupy residues 121–194 (KEQR…YKEQ) and 224–256 (ELKS…FHLD). S286 is modified (phosphoserine). The stretch at 302–421 (LAEKVRLSLQ…KLEETTKLTT (120 aa)) forms a coiled coil. A disordered region spans residues 441-462 (SSLGSLASSRGSLNTSSRGSLN). The C2 domain maps to 698–821 (ETAQVQIGLR…FSSEVFTLWY (124 aa)). Residues 859–887 (ALLARTSAELLAVEQELAQEEEEESGQEE) adopt a coiled-coil conformation. Disordered regions lie at residues 873 to 895 (QELA…DGDW) and 911 to 991 (EAEV…SRQH). The segment covering 875 to 885 (LAQEEEEESGQ) has biased composition (acidic residues). Over residues 923 to 933 (TEDLSSCTSVP) the composition is skewed to polar residues. The span at 938 to 951 (DGNRKESNCAKDLR) shows a compositional bias: basic and acidic residues. Position 1004 is a phosphothreonine (T1004). Position 1022 is a phosphoserine (S1022). Positions 1031–1050 (SLFVRNSTERRSLRVKRTVC) are interaction with PRKCZ. A coiled-coil region spans residues 1068–1144 (DLELDLQASL…EQKQGLNAEK (77 aa)). The span at 1124-1137 (QAEKQAEQSKEEQK) shows a compositional bias: basic and acidic residues. Positions 1124–1143 (QAEKQAEQSKEEQKQGLNAE) are disordered.

The protein belongs to the WWC family. Forms homodimers and heterodimers with WWC1 and WWC3. Interacts with DLC1 and PRKCZ. Interacts (via WW domains) with LATS1 and LATS2.

It localises to the cytoplasm. Its subcellular location is the cytosol. Functionally, regulator of the Hippo signaling pathway, also known as the Salvador-Warts-Hippo (SWH) pathway. Enhances phosphorylation of LATS1 and YAP1 and negatively regulates cell proliferation and organ growth due to a suppression of the transcriptional activity of YAP1, the major effector of the Hippo pathway. This chain is Protein WWC2, found in Homo sapiens (Human).